Consider the following 285-residue polypeptide: uncharacterized protein (285 aa).

The region spanning 107-285 (FLTVDTTIFD…KHHLKRQMIP (179 aa)) is the ATP-grasp domain.

This is an uncharacterized protein from Mycoplasma pneumoniae (strain ATCC 29342 / M129 / Subtype 1) (Mycoplasmoides pneumoniae).